The sequence spans 332 residues: UDP-galactose/UDP-glucose transporter 1 (332 aa).

8 helical membrane passes run I11–L31, H49–I69, A80–I100, V112–I132, T135–L155, I206–P226, I252–A272, and W301–L317. Residues K327–S332 carry the Di-lysine motif motif.

The protein belongs to the nucleotide-sugar transporter family. UDP-galactose:UMP antiporter (TC 2.A.7.11) subfamily.

It localises to the endoplasmic reticulum membrane. Its function is as follows. Essential sugar transporter required for the transport of UDP-galactose and UDP-glucose from the cytoplasm into the Golgi and the endoplasmic reticulum, to ensure quality control of protein folding. Essential for pollen development and involved in embryo sac progress. The chain is UDP-galactose/UDP-glucose transporter 1 from Arabidopsis thaliana (Mouse-ear cress).